An 860-amino-acid chain; its full sequence is Leucine--tRNA ligase (860 aa).

The short motif at 42–52 (PYPSGRLHMGH) is the 'HIGH' region element. Residues 619–623 (KMSKS) carry the 'KMSKS' region motif. Lysine 622 contacts ATP.

This sequence belongs to the class-I aminoacyl-tRNA synthetase family.

The protein localises to the cytoplasm. It carries out the reaction tRNA(Leu) + L-leucine + ATP = L-leucyl-tRNA(Leu) + AMP + diphosphate. In Escherichia coli (strain SMS-3-5 / SECEC), this protein is Leucine--tRNA ligase.